The chain runs to 175 residues: Disulfide bond formation protein B (175 aa).

The Cytoplasmic segment spans residues 1 to 13 (MTAFTRFAHSRAS). A helical transmembrane segment spans residues 14–30 (WFILTGSAIALEAAALY). The Periplasmic segment spans residues 31-48 (FQYVMKLDPCVMCIYQRL). C40 and C43 are disulfide-bonded. Residues 49–64 (AVFGILASGLIGMTAP) traverse the membrane as a helical segment. Residues 65–71 (KFLIVRI) are Cytoplasmic-facing. A helical transmembrane segment spans residues 72 to 89 (LGAIGWAVSATWGLKLAL). Residues 90-144 (ALVDMQNNPSPFSTCSFLPEFPAWMPLHEWFPSVMLPTGMCTDVPWQFMGVTMAE) are Periplasmic-facing. A disulfide bridge links C104 with C130. Residues 145–163 (WMVVAFSGYLVALLLFIVP) form a helical membrane-spanning segment. The Cytoplasmic portion of the chain corresponds to 164–175 (ILSGSNKPSLYK).

It belongs to the DsbB family.

Its subcellular location is the cell inner membrane. Functionally, required for disulfide bond formation in some periplasmic proteins. Acts by oxidizing the DsbA protein. In Shewanella sp. (strain ANA-3), this protein is Disulfide bond formation protein B.